The primary structure comprises 276 residues: 2-dehydro-3-deoxyphosphooctonate aldolase (276 aa).

This sequence belongs to the KdsA family.

It localises to the cytoplasm. The enzyme catalyses D-arabinose 5-phosphate + phosphoenolpyruvate + H2O = 3-deoxy-alpha-D-manno-2-octulosonate-8-phosphate + phosphate. Its pathway is carbohydrate biosynthesis; 3-deoxy-D-manno-octulosonate biosynthesis; 3-deoxy-D-manno-octulosonate from D-ribulose 5-phosphate: step 2/3. It participates in bacterial outer membrane biogenesis; lipopolysaccharide biosynthesis. This is 2-dehydro-3-deoxyphosphooctonate aldolase from Stenotrophomonas maltophilia (strain R551-3).